Here is a 115-residue protein sequence, read N- to C-terminus: Large ribosomal subunit protein bL19 (115 aa).

Belongs to the bacterial ribosomal protein bL19 family.

Its function is as follows. This protein is located at the 30S-50S ribosomal subunit interface and may play a role in the structure and function of the aminoacyl-tRNA binding site. The sequence is that of Large ribosomal subunit protein bL19 from Streptococcus mutans serotype c (strain ATCC 700610 / UA159).